A 267-amino-acid polypeptide reads, in one-letter code: Probable 3-methyl-2-oxobutanoate hydroxymethyltransferase (267 aa).

This sequence belongs to the PanB family.

It catalyses the reaction 3-methyl-2-oxobutanoate + (6R)-5,10-methylene-5,6,7,8-tetrahydrofolate + H2O = 2-dehydropantoate + (6S)-5,6,7,8-tetrahydrofolate. The protein operates within cofactor biosynthesis; (R)-pantothenate biosynthesis; (R)-pantoate from 3-methyl-2-oxobutanoate: step 1/2. The polypeptide is Probable 3-methyl-2-oxobutanoate hydroxymethyltransferase (Schizosaccharomyces pombe (strain 972 / ATCC 24843) (Fission yeast)).